The primary structure comprises 84 residues: MAHKKAGGSTRNGRDSNAQRLGVKCFGGQLISAGSIIVKQRGTKFHPGKNVGCGKDHTIFAIVKGKVEFKKKGLKKRTYINIIN.

It belongs to the bacterial ribosomal protein bL27 family.

This chain is Large ribosomal subunit protein bL27, found in Buchnera aphidicola subsp. Acyrthosiphon pisum (strain Tuc7).